The chain runs to 464 residues: tRNA(Ile)-lysidine synthase (464 aa).

30-35 contacts ATP; the sequence is SGGVDS.

The protein belongs to the tRNA(Ile)-lysidine synthase family.

Its subcellular location is the cytoplasm. The enzyme catalyses cytidine(34) in tRNA(Ile2) + L-lysine + ATP = lysidine(34) in tRNA(Ile2) + AMP + diphosphate + H(+). In terms of biological role, ligates lysine onto the cytidine present at position 34 of the AUA codon-specific tRNA(Ile) that contains the anticodon CAU, in an ATP-dependent manner. Cytidine is converted to lysidine, thus changing the amino acid specificity of the tRNA from methionine to isoleucine. The chain is tRNA(Ile)-lysidine synthase from Shewanella oneidensis (strain ATCC 700550 / JCM 31522 / CIP 106686 / LMG 19005 / NCIMB 14063 / MR-1).